A 685-amino-acid chain; its full sequence is Invasion protein InvA (685 aa).

Transmembrane regions (helical) follow at residues 17 to 37 (ILVL…TYLV), 39 to 59 (FLIA…FYID), 61 to 81 (ILSF…RLAL), 110 to 130 (SLAV…IVIT), 197 to 217 (AIAG…VGMT), 235 to 255 (IGDG…AGFI), 274 to 294 (LLNN…MGTL), and 295 to 315 (PGFP…LFYF).

The protein belongs to the FHIPEP (flagella/HR/invasion proteins export pore) family.

It localises to the cell inner membrane. Its function is as follows. Involved in the invasion of the cells of the intestinal epithelium. Could be involved in the translocation of the InvE protein. The protein is Invasion protein InvA (invA) of Salmonella typhi.